The sequence spans 355 residues: MIPEERLQSVIARFEAVQSEMNSDVPRDRFVALSKEFSELEPVAAAIGHLLARRREYADAEQLLRVRDMAEMAKEEIARLNEELPRLEHEVQLMLLPKDAADDRNVILEVRAGTGGDEAALFAGDLFRMYERYASNQGWKVELIAASEGEMGGYKEIIAGISGPGVYAKLKFESGVHRVQRVPVTEGGGRIHTSAATVAVLPEAEEVDVEIEDKDLRIDVYRASGAGGQHVNKTESAVRITHLPTGIVVAQQDEKSQHKNKARAMQILRARIFDAERERLDRERSAARKGQVGSGDRSERIRTYNFPQSRVTDHRINLTLHKLDQVLEGEALGELIDALIAEDQAARLAAMGDEA.

The residue at position 229 (Q229) is an N5-methylglutamine. The disordered stretch occupies residues 280–299 (LDRERSAARKGQVGSGDRSE).

Belongs to the prokaryotic/mitochondrial release factor family. Methylated by PrmC. Methylation increases the termination efficiency of RF1.

The protein resides in the cytoplasm. Peptide chain release factor 1 directs the termination of translation in response to the peptide chain termination codons UAG and UAA. This Parvibaculum lavamentivorans (strain DS-1 / DSM 13023 / NCIMB 13966) protein is Peptide chain release factor 1.